The primary structure comprises 384 residues: Deoxyguanosinetriphosphate triphosphohydrolase-like protein (384 aa).

The region spanning 62 to 198 (RLTHSLEVST…AALADDISYI (137 aa)) is the HD domain.

It belongs to the dGTPase family. Type 2 subfamily.

This is Deoxyguanosinetriphosphate triphosphohydrolase-like protein from Rickettsia conorii (strain ATCC VR-613 / Malish 7).